The following is a 549-amino-acid chain: Cation/acetate symporter ActP (549 aa).

The next 13 helical transmembrane spans lie at 33–53 (WQAIIMFLIFVVFTLGITYWA), 77–97 (LAIAGDYMSAASFLGISALVF), 103–123 (GLIYSLGFLVGWPIILFLIAE), 148–168 (ILSACGSLVVVALYLIAQMVG), 183–203 (IAVVLVGVLMMMYVLFGGMLA), 206–226 (WVQIIKAVLLLFGASFMAFMV), 262–282 (ISALSLGLGLMFGTAGLPHIL), 303–323 (GFMGYFYILTFIIGFGAIMLV), 355–375 (LFLGFISAVAFATILAVVAGL), 404–424 (VSKITVLILGVIAIILGVLFE), 428–448 (IAFMVGLAFAIAASCNFPIIL), 464–484 (GGWLGLITAVVLMILGPTIWV), and 493–513 (IFPYEYPALFSITVAFLGIWF).

It belongs to the sodium:solute symporter (SSF) (TC 2.A.21) family.

The protein resides in the cell inner membrane. Its function is as follows. Transports acetate. The sequence is that of Cation/acetate symporter ActP from Escherichia fergusonii (strain ATCC 35469 / DSM 13698 / CCUG 18766 / IAM 14443 / JCM 21226 / LMG 7866 / NBRC 102419 / NCTC 12128 / CDC 0568-73).